The following is a 186-amino-acid chain: Large ribosomal subunit protein uL6 (186 aa).

This sequence belongs to the universal ribosomal protein uL6 family. Part of the 50S ribosomal subunit.

This protein binds to the 23S rRNA, and is important in its secondary structure. It is located near the subunit interface in the base of the L7/L12 stalk, and near the tRNA binding site of the peptidyltransferase center. The protein is Large ribosomal subunit protein uL6 of Hyperthermus butylicus (strain DSM 5456 / JCM 9403 / PLM1-5).